A 260-amino-acid polypeptide reads, in one-letter code: Thaumatin-like protein 1 (260 aa).

Residues 1-32 (MIITVLHSHVSFYFIILSFLFFHALHLVGSDG) form the signal peptide. 8 disulfides stabilise this stretch: C41-C255, C89-C100, C105-C112, C166-C245, C171-C228, C179-C191, C195-C204, and C205-C215.

It belongs to the thaumatin family. Expressed only in roots.

Involved in local responses of roots to colonization by non-pathogenic plant growth-promoting rhizobacteria (PGPR) fluorescent Pseudomonas spp., but seems to not being required for the establishment of subsequent induced systemic resistance (ISR). This Arabidopsis thaliana (Mouse-ear cress) protein is Thaumatin-like protein 1.